A 181-amino-acid polypeptide reads, in one-letter code: Inner membrane-spanning protein YciB (181 aa).

The next 5 helical transmembrane spans lie at 3-23 (FLFDLFPVILFFITFKIYGIY), 49-69 (TMLWVSLVLIVVFGSATLILQ), 76-96 (WKPSVLYWLFAAALLIAQAIF), 119-139 (VNASWAAFFAFMGAANLYVAF), and 149-169 (FKLFGFMGLMLVFVVLQGLML).

It belongs to the YciB family.

It is found in the cell inner membrane. In terms of biological role, plays a role in cell envelope biogenesis, maintenance of cell envelope integrity and membrane homeostasis. This Nitrosospira multiformis (strain ATCC 25196 / NCIMB 11849 / C 71) protein is Inner membrane-spanning protein YciB.